We begin with the raw amino-acid sequence, 200 residues long: Peroxiredoxin (200 aa).

A Thioredoxin domain is found at 6–165 (AQIGKPAPEF…TLRLVQAFQH (160 aa)). Cys52 acts as the Cysteine sulfenic acid (-SOH) intermediate in catalysis.

It belongs to the peroxiredoxin family. AhpC/Prx1 subfamily. Homodimer; disulfide-linked, upon oxidation.

The enzyme catalyses a hydroperoxide + [thioredoxin]-dithiol = an alcohol + [thioredoxin]-disulfide + H2O. Functionally, thiol-specific peroxidase that catalyzes the reduction of hydrogen peroxide and organic hydroperoxides to water and alcohols, respectively. Plays a role in cell protection against oxidative stress by detoxifying peroxides and as sensor of hydrogen peroxide-mediated signaling events. In Cynops pyrrhogaster (Japanese fire-bellied newt), this protein is Peroxiredoxin.